We begin with the raw amino-acid sequence, 427 residues long: Peptidase B (427 aa).

Mn(2+) contacts are provided by Lys195 and Asp200. Lys207 is a catalytic residue. Residues Asp218, Asp277, and Glu279 each contribute to the Mn(2+) site. Residue Arg281 is part of the active site.

Belongs to the peptidase M17 family. Homohexamer. Mn(2+) serves as cofactor.

It is found in the cytoplasm. The enzyme catalyses Release of an N-terminal amino acid, Xaa, from a peptide or arylamide. Xaa is preferably Glu or Asp but may be other amino acids, including Leu, Met, His, Cys and Gln.. Functionally, probably plays an important role in intracellular peptide degradation. The protein is Peptidase B of Shigella flexneri.